Consider the following 273-residue polypeptide: Large ribosomal subunit protein uL2 (273 aa).

The segment at 196–273 (GNSDHGLESS…SSKYIIERRK (78 aa)) is disordered. Composition is skewed to basic residues over residues 209–220 (GRTRWMGRRPRN) and 255–264 (LKTRAPKKQS).

This sequence belongs to the universal ribosomal protein uL2 family. Part of the 50S ribosomal subunit. Forms a bridge to the 30S subunit in the 70S ribosome.

Functionally, one of the primary rRNA binding proteins. Required for association of the 30S and 50S subunits to form the 70S ribosome, for tRNA binding and peptide bond formation. It has been suggested to have peptidyltransferase activity; this is somewhat controversial. Makes several contacts with the 16S rRNA in the 70S ribosome. This chain is Large ribosomal subunit protein uL2, found in Phocaeicola vulgatus (strain ATCC 8482 / DSM 1447 / JCM 5826 / CCUG 4940 / NBRC 14291 / NCTC 11154) (Bacteroides vulgatus).